Reading from the N-terminus, the 385-residue chain is Glucans biosynthesis protein C (385 aa).

The next 10 helical transmembrane spans lie at 17 to 37, 60 to 80, 91 to 111, 137 to 157, 173 to 193, 212 to 232, 239 to 259, 274 to 294, 311 to 331, and 338 to 358; these read AWLM…SHTW, MQVF…RYPL, VGIP…IMLQ, ISHL…VWIF, KFSM…YAVI, FIVM…LAFI, LFTT…VAYL, TESV…FSFG, ASLF…AYIT, and WLGF…LYEI.

It belongs to the acyltransferase 3 family. OpgC subfamily.

The protein resides in the cell membrane. The protein operates within glycan metabolism; osmoregulated periplasmic glucan (OPG) biosynthesis. Functionally, necessary for the succinyl substitution of periplasmic glucans. Could catalyze the transfer of succinyl residues from the cytoplasmic side of the membrane to the nascent glucan backbones on the periplasmic side of the membrane. The protein is Glucans biosynthesis protein C of Shigella dysenteriae serotype 1 (strain Sd197).